The chain runs to 91 residues: uncharacterized protein (91 aa).

It belongs to the FrmR/RcnR family.

It localises to the cytoplasm. This is an uncharacterized protein from Serratia marcescens.